A 292-amino-acid chain; its full sequence is Acetyl-coenzyme A carboxylase carboxyl transferase subunit beta (292 aa).

Positions 36–292 (MWSKCEKCAK…LLRMHEVDYE (257 aa)) constitute a CoA carboxyltransferase N-terminal domain. Zn(2+) is bound by residues Cys-40, Cys-43, Cys-59, and Cys-62. Residues 40-62 (CEKCAKILYTEDLRENFNVCPNC) form a C4-type zinc finger.

The protein belongs to the AccD/PCCB family. Acetyl-CoA carboxylase is a heterohexamer composed of biotin carboxyl carrier protein (AccB), biotin carboxylase (AccC) and two subunits each of ACCase subunit alpha (AccA) and ACCase subunit beta (AccD). The cofactor is Zn(2+).

The protein resides in the cytoplasm. The catalysed reaction is N(6)-carboxybiotinyl-L-lysyl-[protein] + acetyl-CoA = N(6)-biotinyl-L-lysyl-[protein] + malonyl-CoA. The protein operates within lipid metabolism; malonyl-CoA biosynthesis; malonyl-CoA from acetyl-CoA: step 1/1. Its function is as follows. Component of the acetyl coenzyme A carboxylase (ACC) complex. Biotin carboxylase (BC) catalyzes the carboxylation of biotin on its carrier protein (BCCP) and then the CO(2) group is transferred by the transcarboxylase to acetyl-CoA to form malonyl-CoA. This Clostridium perfringens (strain 13 / Type A) protein is Acetyl-coenzyme A carboxylase carboxyl transferase subunit beta.